The primary structure comprises 350 residues: Uroporphyrinogen decarboxylase (350 aa).

Residues 28 to 32 (RQAGR), Asp78, Tyr155, Ser210, and His325 each bind substrate.

The protein belongs to the uroporphyrinogen decarboxylase family. Homodimer.

The protein localises to the cytoplasm. The catalysed reaction is uroporphyrinogen III + 4 H(+) = coproporphyrinogen III + 4 CO2. The protein operates within porphyrin-containing compound metabolism; protoporphyrin-IX biosynthesis; coproporphyrinogen-III from 5-aminolevulinate: step 4/4. Its function is as follows. Catalyzes the decarboxylation of four acetate groups of uroporphyrinogen-III to yield coproporphyrinogen-III. The protein is Uroporphyrinogen decarboxylase of Trichormus variabilis (strain ATCC 29413 / PCC 7937) (Anabaena variabilis).